Consider the following 63-residue polypeptide: uncharacterized protein (63 aa).

The N-terminal stretch at 1–15 is a signal peptide; it reads MRNPVVWGMIYFAVG. The N-palmitoyl cysteine moiety is linked to residue C16. C16 is lipidated: S-diacylglycerol cysteine. Residues 34–56 traverse the membrane as a helical segment; that stretch reads SILLMVFAAYNISISFKMFAFSF.

It is found in the cell membrane. This is an uncharacterized protein from Bacillus subtilis (strain 168).